Reading from the N-terminus, the 439-residue chain is MKKNLRIVSAAAAALLAVAPIAATAMPVNAATTINADSAINANTNAKYDVDVTPSISAIAAVAKSDTMPAIPGSLTGSISASYNGKSYTANLPKDSGNATITDSNNNTVKPAELEADKAYTVTVPDVSFNFGSENAGKEITIGSANPNVTFTEKTGDQPASTVKVTLDQDGVAKLSSVQIKNVYAIDTTYNSNVNFYDVTTGATVTTGAVSIDADNQGQLNITSVVAAINSKYFAAQYDKKQLTNVTFDTETAVKDALKAQKIEVSSVGYFKAPHTFTVNVKATSNKNGKSATLPVTVTVPNVADPVVPSQSKTIMHNAYFYDKDAKRVGTDKVTRYNTVTVAMNTTKLANGISYYEVIENGKATGKYINADNIDGTKRTLKHNAYVYKTSKKRANKVVLKKGTEVTTYGGSYKFKNGQRYYKIGANTEKTYVKVANFE.

The first 30 residues, 1 to 30, serve as a signal peptide directing secretion; it reads MKKNLRIVSAAAAALLAVAPIAATAMPVNA.

In terms of processing, glycosylated.

The protein resides in the secreted. The protein localises to the cell wall. It localises to the S-layer. Its function is as follows. The S-layer is a paracrystalline mono-layered assembly of proteins which coat the surface of bacteria. This chain is S-layer protein (slpH), found in Lactobacillus helveticus (Lactobacillus suntoryeus).